Reading from the N-terminus, the 574-residue chain is 2-succinyl-5-enolpyruvyl-6-hydroxy-3-cyclohexene-1-carboxylate synthase (574 aa).

Belongs to the TPP enzyme family. MenD subfamily. As to quaternary structure, homodimer. It depends on Mg(2+) as a cofactor. Requires Mn(2+) as cofactor. Thiamine diphosphate serves as cofactor.

The catalysed reaction is isochorismate + 2-oxoglutarate + H(+) = 5-enolpyruvoyl-6-hydroxy-2-succinyl-cyclohex-3-ene-1-carboxylate + CO2. Its pathway is quinol/quinone metabolism; 1,4-dihydroxy-2-naphthoate biosynthesis; 1,4-dihydroxy-2-naphthoate from chorismate: step 2/7. It participates in cofactor biosynthesis; phylloquinone biosynthesis. Functionally, catalyzes the thiamine diphosphate-dependent decarboxylation of 2-oxoglutarate and the subsequent addition of the resulting succinic semialdehyde-thiamine pyrophosphate anion to isochorismate to yield 2-succinyl-5-enolpyruvyl-6-hydroxy-3-cyclohexene-1-carboxylate (SEPHCHC). In Prochlorococcus marinus (strain SARG / CCMP1375 / SS120), this protein is 2-succinyl-5-enolpyruvyl-6-hydroxy-3-cyclohexene-1-carboxylate synthase.